The following is a 175-amino-acid chain: Large ribosomal subunit protein uL10 (175 aa).

It belongs to the universal ribosomal protein uL10 family. In terms of assembly, part of the ribosomal stalk of the 50S ribosomal subunit. The N-terminus interacts with L11 and the large rRNA to form the base of the stalk. The C-terminus forms an elongated spine to which L12 dimers bind in a sequential fashion forming a multimeric L10(L12)X complex.

Its function is as follows. Forms part of the ribosomal stalk, playing a central role in the interaction of the ribosome with GTP-bound translation factors. In Xylella fastidiosa (strain 9a5c), this protein is Large ribosomal subunit protein uL10 (rplJ).